Here is an 85-residue protein sequence, read N- to C-terminus: Translation initiation factor IF-1 2 (85 aa).

In terms of domain architecture, S1-like spans 1–72; it reads MAKEELIEMQ…TKGRITFRHL (72 aa).

It belongs to the IF-1 family. In terms of assembly, component of the 30S ribosomal translation pre-initiation complex which assembles on the 30S ribosome in the order IF-2 and IF-3, IF-1 and N-formylmethionyl-tRNA(fMet); mRNA recruitment can occur at any time during PIC assembly.

Its subcellular location is the cytoplasm. One of the essential components for the initiation of protein synthesis. Stabilizes the binding of IF-2 and IF-3 on the 30S subunit to which N-formylmethionyl-tRNA(fMet) subsequently binds. Helps modulate mRNA selection, yielding the 30S pre-initiation complex (PIC). Upon addition of the 50S ribosomal subunit IF-1, IF-2 and IF-3 are released leaving the mature 70S translation initiation complex. This chain is Translation initiation factor IF-1 2, found in Paracidovorax citrulli (strain AAC00-1) (Acidovorax citrulli).